A 207-amino-acid polypeptide reads, in one-letter code: MKFKDKLKFYVITDSNYSDEVISVEEALKGGASSIQLRMKTSSTRKMIEVGNKLRKLTSEYDALFFVNDRLDVAQAVNADGIHVGIDDMPISKIKEIAPNLIIGASAYNTDEMKTAEMGGADYLGVGAVYSTNTKLDARNLGLDGLKNISKIASIPIVAIGGINHLNVENVLECGVSGVAVVSAIVGAENILKSAENMNELIKKYIK.

4-amino-2-methyl-5-(diphosphooxymethyl)pyrimidine is bound by residues 36–40 (QLRMK) and asparagine 68. Positions 69 and 88 each coordinate Mg(2+). Serine 106 contributes to the 4-amino-2-methyl-5-(diphosphooxymethyl)pyrimidine binding site. Residue 132-134 (TNT) participates in 2-[(2R,5Z)-2-carboxy-4-methylthiazol-5(2H)-ylidene]ethyl phosphate binding. Lysine 135 serves as a coordination point for 4-amino-2-methyl-5-(diphosphooxymethyl)pyrimidine. Residues glycine 162 and 182-183 (VS) each bind 2-[(2R,5Z)-2-carboxy-4-methylthiazol-5(2H)-ylidene]ethyl phosphate.

Belongs to the thiamine-phosphate synthase family. Mg(2+) is required as a cofactor.

The catalysed reaction is 2-[(2R,5Z)-2-carboxy-4-methylthiazol-5(2H)-ylidene]ethyl phosphate + 4-amino-2-methyl-5-(diphosphooxymethyl)pyrimidine + 2 H(+) = thiamine phosphate + CO2 + diphosphate. The enzyme catalyses 2-(2-carboxy-4-methylthiazol-5-yl)ethyl phosphate + 4-amino-2-methyl-5-(diphosphooxymethyl)pyrimidine + 2 H(+) = thiamine phosphate + CO2 + diphosphate. It carries out the reaction 4-methyl-5-(2-phosphooxyethyl)-thiazole + 4-amino-2-methyl-5-(diphosphooxymethyl)pyrimidine + H(+) = thiamine phosphate + diphosphate. It participates in cofactor biosynthesis; thiamine diphosphate biosynthesis; thiamine phosphate from 4-amino-2-methyl-5-diphosphomethylpyrimidine and 4-methyl-5-(2-phosphoethyl)-thiazole: step 1/1. Its function is as follows. Condenses 4-methyl-5-(beta-hydroxyethyl)thiazole monophosphate (THZ-P) and 2-methyl-4-amino-5-hydroxymethyl pyrimidine pyrophosphate (HMP-PP) to form thiamine monophosphate (TMP). The polypeptide is Thiamine-phosphate synthase (Methanococcus maripaludis (strain C6 / ATCC BAA-1332)).